The following is a 384-amino-acid chain: Somatostatin receptor type 4 (384 aa).

Residues 1–34 (MNTPATLPLGGEDTTWTPGINASWAPDEEEDAVR) form a disordered region. Residues 1–41 (MNTPATLPLGGEDTTWTPGINASWAPDEEEDAVRSDGTGTA) are Extracellular-facing. An N-linked (GlcNAc...) asparagine glycan is attached at N21. A helical membrane pass occupies residues 42–69 (GMVTIQCIYALVCLVGLVGNALVIFVIL). The Cytoplasmic segment spans residues 70-79 (RYAKMKTATN). Residues 80–105 (IYLLNLAVADELFMLSVPFVASAAAL) form a helical membrane-spanning segment. The Extracellular segment spans residues 106–116 (RHWPFGAVLCR). C115 and C194 are disulfide-bonded. Residues 117–138 (AVLSVDGLNMFTSVFCLTVLSV) traverse the membrane as a helical segment. Over 139 to 160 (DRYVAVVHPLRAATYRRPSVAK) the chain is Cytoplasmic. A helical membrane pass occupies residues 161-181 (LINLGVWLASLLVTLPIAVFA). Topologically, residues 182-203 (DTRPARGGEAVACNLHWPHPAW) are extracellular. A helical membrane pass occupies residues 204 to 228 (SAVFVIYTFLLGFLLPVLAIGLCYL). Topologically, residues 229-254 (LIVGKMRAVALRAGWQQRRRSEKKIT) are cytoplasmic. A helical transmembrane segment spans residues 255–280 (RLVLMVVTVFVLCWMPFYVVQLLNLF). The Extracellular segment spans residues 281–287 (VTSLDAT). The helical transmembrane segment at 288–311 (VNHVSLILSYANSCANPILYGFLS) threads the bilayer. At 312 to 384 (DNFRRSFQRV…RVPFTKTTTF (73 aa)) the chain is on the cytoplasmic side. C323 carries the S-palmitoyl cysteine lipid modification.

Belongs to the G-protein coupled receptor 1 family. In terms of tissue distribution, brain, lung, heart and islets. Moderate levels in the hippocampus, cortex and olfactory bulb.

It is found in the cell membrane. Receptor for somatostatin-14. The activity of this receptor is mediated by G proteins which inhibits adenylyl cyclase. It is functionally coupled not only to inhibition of adenylate cyclase, but also to activation of both arachidonate release and mitogen-activated protein (MAP) kinase cascade. This is Somatostatin receptor type 4 (Sstr4) from Rattus norvegicus (Rat).